The sequence spans 445 residues: Phosphoglucosamine mutase 1 (445 aa).

Ser-102 (phosphoserine intermediate) is an active-site residue. Positions 102, 241, 243, and 245 each coordinate Mg(2+). At Ser-102 the chain carries Phosphoserine.

It belongs to the phosphohexose mutase family. It depends on Mg(2+) as a cofactor. Activated by phosphorylation.

The catalysed reaction is alpha-D-glucosamine 1-phosphate = D-glucosamine 6-phosphate. In terms of biological role, catalyzes the conversion of glucosamine-6-phosphate to glucosamine-1-phosphate. This Shewanella sp. (strain MR-4) protein is Phosphoglucosamine mutase 1.